Consider the following 178-residue polypeptide: Large ribosomal subunit protein uL6 (178 aa).

It belongs to the universal ribosomal protein uL6 family. Part of the 50S ribosomal subunit.

Functionally, this protein binds to the 23S rRNA, and is important in its secondary structure. It is located near the subunit interface in the base of the L7/L12 stalk, and near the tRNA binding site of the peptidyltransferase center. The polypeptide is Large ribosomal subunit protein uL6 (Streptococcus mutans serotype c (strain ATCC 700610 / UA159)).